The following is a 265-amino-acid chain: uncharacterized protein (265 aa).

A divalent metal cation contacts are provided by histidine 7, histidine 9, glutamate 94, histidine 130, histidine 155, and aspartate 205.

This sequence belongs to the metallo-dependent hydrolases superfamily. TatD-type hydrolase family. Requires a divalent metal cation as cofactor.

This is an uncharacterized protein from Escherichia coli O157:H7.